The chain runs to 373 residues: ATP-dependent 6-phosphofructokinase (373 aa).

ATP-binding positions include glycine 12, arginine 74–aspartate 75, and glycine 110–threonine 113. Residues threonine 133–aspartate 135, arginine 170, methionine 177–histidine 179, glutamate 230, arginine 291, and tyrosine 297–arginine 300 each bind substrate. The active-site Proton acceptor is aspartate 135.

It belongs to the phosphofructokinase type A (PFKA) family. Mixed-substrate PFK group III subfamily. As to quaternary structure, homodimer or homotetramer. Requires Mg(2+) as cofactor.

The protein resides in the cytoplasm. The catalysed reaction is beta-D-fructose 6-phosphate + ATP = beta-D-fructose 1,6-bisphosphate + ADP + H(+). Its pathway is carbohydrate degradation; glycolysis; D-glyceraldehyde 3-phosphate and glycerone phosphate from D-glucose: step 3/4. Functionally, catalyzes the phosphorylation of D-fructose 6-phosphate to fructose 1,6-bisphosphate by ATP, the first committing step of glycolysis. The protein is ATP-dependent 6-phosphofructokinase of Propionibacterium freudenreichii subsp. shermanii (strain ATCC 9614 / DSM 4902 / CIP 103027 / NCIMB 8099 / CIRM-BIA1).